The sequence spans 123 residues: Large ribosomal subunit protein bL12 (123 aa).

Belongs to the bacterial ribosomal protein bL12 family. In terms of assembly, homodimer. Part of the ribosomal stalk of the 50S ribosomal subunit. Forms a multimeric L10(L12)X complex, where L10 forms an elongated spine to which 2 to 4 L12 dimers bind in a sequential fashion. Binds GTP-bound translation factors.

Forms part of the ribosomal stalk which helps the ribosome interact with GTP-bound translation factors. Is thus essential for accurate translation. The protein is Large ribosomal subunit protein bL12 of Rhodopseudomonas palustris (strain BisB5).